Reading from the N-terminus, the 218-residue chain is dTTP/UTP pyrophosphatase (218 aa).

Aspartate 69 acts as the Proton acceptor in catalysis.

Belongs to the Maf family. YhdE subfamily. The cofactor is a divalent metal cation.

The protein resides in the cytoplasm. The enzyme catalyses dTTP + H2O = dTMP + diphosphate + H(+). The catalysed reaction is UTP + H2O = UMP + diphosphate + H(+). Its function is as follows. Nucleoside triphosphate pyrophosphatase that hydrolyzes dTTP and UTP. May have a dual role in cell division arrest and in preventing the incorporation of modified nucleotides into cellular nucleic acids. This Thermomicrobium roseum (strain ATCC 27502 / DSM 5159 / P-2) protein is dTTP/UTP pyrophosphatase.